The chain runs to 299 residues: Ribosomal protein L11 methyltransferase (299 aa).

4 residues coordinate S-adenosyl-L-methionine: Thr150, Gly171, Asp193, and Asn234.

Belongs to the methyltransferase superfamily. PrmA family.

It is found in the cytoplasm. It catalyses the reaction L-lysyl-[protein] + 3 S-adenosyl-L-methionine = N(6),N(6),N(6)-trimethyl-L-lysyl-[protein] + 3 S-adenosyl-L-homocysteine + 3 H(+). Functionally, methylates ribosomal protein L11. The chain is Ribosomal protein L11 methyltransferase from Dictyoglomus turgidum (strain DSM 6724 / Z-1310).